The chain runs to 547 residues: (R)-citramalate synthase (547 aa).

The region spanning Leu8–Ala278 is the Pyruvate carboxyltransferase domain.

It belongs to the alpha-IPM synthase/homocitrate synthase family.

The catalysed reaction is pyruvate + acetyl-CoA + H2O = (3R)-citramalate + CoA + H(+). Its pathway is amino-acid biosynthesis; L-isoleucine biosynthesis; 2-oxobutanoate from pyruvate: step 1/3. In terms of biological role, catalyzes the condensation of pyruvate and acetyl-coenzyme A to form (R)-citramalate. The polypeptide is (R)-citramalate synthase (Synechocystis sp. (strain ATCC 27184 / PCC 6803 / Kazusa)).